The chain runs to 484 residues: Glutamyl-tRNA(Gln) amidotransferase subunit A (484 aa).

Active-site charge relay system residues include Lys-77 and Ser-152. The active-site Acyl-ester intermediate is the Ser-176.

The protein belongs to the amidase family. GatA subfamily. Heterotrimer of A, B and C subunits.

The catalysed reaction is L-glutamyl-tRNA(Gln) + L-glutamine + ATP + H2O = L-glutaminyl-tRNA(Gln) + L-glutamate + ADP + phosphate + H(+). Its function is as follows. Allows the formation of correctly charged Gln-tRNA(Gln) through the transamidation of misacylated Glu-tRNA(Gln) in organisms which lack glutaminyl-tRNA synthetase. The reaction takes place in the presence of glutamine and ATP through an activated gamma-phospho-Glu-tRNA(Gln). This Pseudomonas aeruginosa (strain ATCC 15692 / DSM 22644 / CIP 104116 / JCM 14847 / LMG 12228 / 1C / PRS 101 / PAO1) protein is Glutamyl-tRNA(Gln) amidotransferase subunit A.